Here is a 139-residue protein sequence, read N- to C-terminus: Putative pre-16S rRNA nuclease (139 aa).

This sequence belongs to the YqgF nuclease family.

It localises to the cytoplasm. Functionally, could be a nuclease involved in processing of the 5'-end of pre-16S rRNA. The sequence is that of Putative pre-16S rRNA nuclease from Streptococcus thermophilus (strain CNRZ 1066).